The primary structure comprises 855 residues: Sucrose synthase 7 (855 aa).

The tract at residues 279–758 (SIFNIVIFSI…GLQRIYECYT (480 aa)) is GT-B glycosyltransferase.

Belongs to the glycosyltransferase 1 family. Plant sucrose synthase subfamily. Predominantly expressed in roots, flowers and immature seeds.

The protein resides in the cytoplasm. Its subcellular location is the membrane. The catalysed reaction is an NDP-alpha-D-glucose + D-fructose = a ribonucleoside 5'-diphosphate + sucrose + H(+). Functionally, sucrose-cleaving enzyme that provides UDP-glucose and fructose for various metabolic pathways. The sequence is that of Sucrose synthase 7 (SUS7) from Oryza sativa subsp. japonica (Rice).